A 397-amino-acid chain; its full sequence is CCA-adding enzyme (397 aa).

Residues G26 and R29 each contribute to the ATP site. G26 and R29 together coordinate CTP. The Mg(2+) site is built by D39 and D41. The ATP site is built by R110, D153, R156, R159, and R162. CTP is bound by residues R110, D153, R156, R159, and R162.

It belongs to the tRNA nucleotidyltransferase/poly(A) polymerase family. Bacterial CCA-adding enzyme type 3 subfamily. In terms of assembly, homodimer. Requires Mg(2+) as cofactor.

The catalysed reaction is a tRNA precursor + 2 CTP + ATP = a tRNA with a 3' CCA end + 3 diphosphate. The enzyme catalyses a tRNA with a 3' CCA end + 2 CTP + ATP = a tRNA with a 3' CCACCA end + 3 diphosphate. Its function is as follows. Catalyzes the addition and repair of the essential 3'-terminal CCA sequence in tRNAs without using a nucleic acid template. Adds these three nucleotides in the order of C, C, and A to the tRNA nucleotide-73, using CTP and ATP as substrates and producing inorganic pyrophosphate. tRNA 3'-terminal CCA addition is required both for tRNA processing and repair. Also involved in tRNA surveillance by mediating tandem CCA addition to generate a CCACCA at the 3' terminus of unstable tRNAs. While stable tRNAs receive only 3'-terminal CCA, unstable tRNAs are marked with CCACCA and rapidly degraded. The sequence is that of CCA-adding enzyme from Bacillus cereus (strain Q1).